The sequence spans 567 residues: Signal transducer and activator of transcription b (567 aa).

Residues 449-548 form the SH2 domain; the sequence is WYDGLVYGFC…LGGRNKPRIR (100 aa).

Belongs to the transcription factor STAT family. May interact with sodium-dependent transporter snf-12; the interaction is probably direct.

It is found in the cytoplasm. Its subcellular location is the nucleus. The protein localises to the vesicle. Its function is as follows. Carries out a dual function: signal transduction and activation of transcription. Required, in concert with transcription factor elt-3, for up-regulation of the vacuolar H(+)-ATPase and acceleration of lysosome maturation at molt. As part of the innate immune response to molting and injury of the adult epidermis, positively regulates the expression of epidermal antimicrobial peptides, such as nlp-29. Through positively modulating the expression of epidermal antimicrobial peptides, such as nlp-29, plays a role in resistance to fungal infection and in the response to physical wounding and phorbol ester PMA treatment. Functions cell autonomously in the epidermis, in concert with sodium-dependent transporter snf-12, probably acting at vesicular membranes, downstream of a p38 MAPK/pmk-1 pathway. The protein is Signal transducer and activator of transcription b of Caenorhabditis elegans.